Here is a 334-residue protein sequence, read N- to C-terminus: Holliday junction branch migration complex subunit RuvB (334 aa).

A large ATPase domain (RuvB-L) region spans residues alanine 4–tyrosine 184. ATP contacts are provided by residues arginine 24, glycine 65, lysine 68, threonine 69, threonine 70, glutamate 131 to tyrosine 133, arginine 174, tyrosine 184, and arginine 221. Threonine 69 contacts Mg(2+). The segment at asparagine 185–aspartate 255 is small ATPAse domain (RuvB-S). A head domain (RuvB-H) region spans residues glycine 258–glutamate 334. DNA-binding residues include arginine 294, arginine 313, and arginine 318.

It belongs to the RuvB family. Homohexamer. Forms an RuvA(8)-RuvB(12)-Holliday junction (HJ) complex. HJ DNA is sandwiched between 2 RuvA tetramers; dsDNA enters through RuvA and exits via RuvB. An RuvB hexamer assembles on each DNA strand where it exits the tetramer. Each RuvB hexamer is contacted by two RuvA subunits (via domain III) on 2 adjacent RuvB subunits; this complex drives branch migration. In the full resolvosome a probable DNA-RuvA(4)-RuvB(12)-RuvC(2) complex forms which resolves the HJ.

Its subcellular location is the cytoplasm. It carries out the reaction ATP + H2O = ADP + phosphate + H(+). In terms of biological role, the RuvA-RuvB-RuvC complex processes Holliday junction (HJ) DNA during genetic recombination and DNA repair, while the RuvA-RuvB complex plays an important role in the rescue of blocked DNA replication forks via replication fork reversal (RFR). RuvA specifically binds to HJ cruciform DNA, conferring on it an open structure. The RuvB hexamer acts as an ATP-dependent pump, pulling dsDNA into and through the RuvAB complex. RuvB forms 2 homohexamers on either side of HJ DNA bound by 1 or 2 RuvA tetramers; 4 subunits per hexamer contact DNA at a time. Coordinated motions by a converter formed by DNA-disengaged RuvB subunits stimulates ATP hydrolysis and nucleotide exchange. Immobilization of the converter enables RuvB to convert the ATP-contained energy into a lever motion, pulling 2 nucleotides of DNA out of the RuvA tetramer per ATP hydrolyzed, thus driving DNA branch migration. The RuvB motors rotate together with the DNA substrate, which together with the progressing nucleotide cycle form the mechanistic basis for DNA recombination by continuous HJ branch migration. Branch migration allows RuvC to scan DNA until it finds its consensus sequence, where it cleaves and resolves cruciform DNA. This Shewanella sp. (strain ANA-3) protein is Holliday junction branch migration complex subunit RuvB.